Reading from the N-terminus, the 110-residue chain is MANAHDTHHEGNHGSVKSYMIGFILSIILTAIPFGLAMSPSLPKNLTVLIIVAMAVIQVVVHLVYFLHMDRSKEQRNNVWTFLFTTLVIALLVGLSLWIMFSIHFEMLAK.

Residues 1–18 are Cytoplasmic-facing; that stretch reads MANAHDTHHEGNHGSVKS. A helical membrane pass occupies residues 19–39; that stretch reads YMIGFILSIILTAIPFGLAMS. At 40-46 the chain is on the periplasmic side; sequence PSLPKNL. Residues 47–67 form a helical membrane-spanning segment; that stretch reads TVLIIVAMAVIQVVVHLVYFL. Residues 68–78 lie on the Cytoplasmic side of the membrane; the sequence is HMDRSKEQRNN. A helical membrane pass occupies residues 79–99; that stretch reads VWTFLFTTLVIALLVGLSLWI. Topologically, residues 100 to 110 are periplasmic; sequence MFSIHFEMLAK.

It belongs to the cytochrome c oxidase bacterial subunit 4 family. In terms of assembly, heterooctamer of two A chains, two B chains, two C chains and two D chains.

It localises to the cell inner membrane. Cytochrome bo(3) ubiquinol terminal oxidase is the component of the aerobic respiratory chain of E.coli that predominates when cells are grown at high aeration. Has proton pump activity across the membrane in addition to electron transfer, pumping 2 protons/electron. The chain is Cytochrome bo(3) ubiquinol oxidase subunit 4 (cyoD) from Pseudomonas putida (Arthrobacter siderocapsulatus).